The following is a 289-amino-acid chain: Syntaxin-3 (289 aa).

The Cytoplasmic portion of the chain corresponds to 1–263 (MKDRLEQLKA…VKYQSQARKK (263 aa)). The stretch at 32-111 (MDEFFSEIEE…IEEDEVRSSA (80 aa)) forms a coiled coil. Positions 191–253 (LSEIEGRHKD…EKARDETKKA (63 aa)) constitute a t-SNARE coiled-coil homology domain. A helical; Anchor for type IV membrane protein transmembrane segment spans residues 264–284 (LIIIIVLVVVLLGILALIIGL). The Extracellular segment spans residues 285–289 (SVGLN).

Belongs to the syntaxin family. In terms of assembly, interacts with REEP6. Interacts with PRPH2 in rod and cone photoreceptors. Interacts with ROM1. Interacts with SNAP25. Interacts with VAMP2. As to quaternary structure, interacts with IPO5. In terms of tissue distribution, expressed in small intestine, kidney, pancreas, placenta as well as in retina. Weaker expression in lung, liver and heart. Not expressed in brain and skeletal muscle. Expressed only in the retina. As to expression, ubiquitously expressed.

It is found in the apical cell membrane. The protein resides in the nucleus. Its function is as follows. Potentially involved in docking of synaptic vesicles at presynaptic active zones. Apical receptor involved in membrane fusion of apical vesicles. Functionally, essential for survival of retinal photoreceetors. In terms of biological role, functions as a regulator of gene expression. This chain is Syntaxin-3 (STX3), found in Homo sapiens (Human).